The following is a 134-amino-acid chain: Large ribosomal subunit protein eL32 (134 aa).

This sequence belongs to the eukaryotic ribosomal protein eL32 family.

This is Large ribosomal subunit protein eL32 (RpL32) from Drosophila bifasciata (Fruit fly).